The chain runs to 657 residues: tRNA 5-methylaminomethyl-2-thiouridine biosynthesis bifunctional protein MnmC (657 aa).

Residues 1–235 are tRNA (mnm(5)s(2)U34)-methyltransferase; the sequence is MSDAHNAQLD…KREMLAGPFQ (235 aa). The FAD-dependent cmnm(5)s(2)U34 oxidoreductase stretch occupies residues 261–657; it reads IGAGLAGCAT…QLIRGTGSPT (397 aa).

In the N-terminal section; belongs to the methyltransferase superfamily. tRNA (mnm(5)s(2)U34)-methyltransferase family. It in the C-terminal section; belongs to the DAO family. Requires FAD as cofactor.

The protein localises to the cytoplasm. The catalysed reaction is 5-aminomethyl-2-thiouridine(34) in tRNA + S-adenosyl-L-methionine = 5-methylaminomethyl-2-thiouridine(34) in tRNA + S-adenosyl-L-homocysteine + H(+). Functionally, catalyzes the last two steps in the biosynthesis of 5-methylaminomethyl-2-thiouridine (mnm(5)s(2)U) at the wobble position (U34) in tRNA. Catalyzes the FAD-dependent demodification of cmnm(5)s(2)U34 to nm(5)s(2)U34, followed by the transfer of a methyl group from S-adenosyl-L-methionine to nm(5)s(2)U34, to form mnm(5)s(2)U34. This chain is tRNA 5-methylaminomethyl-2-thiouridine biosynthesis bifunctional protein MnmC, found in Ectopseudomonas mendocina (strain ymp) (Pseudomonas mendocina).